Here is a 711-residue protein sequence, read N- to C-terminus: DNA topoisomerase 3 (711 aa).

The Toprim domain maps to 2-135 (KSLILAEKPS…LRRLWISSVT (134 aa)). 2 residues coordinate Mg(2+): Glu-8 and Asp-104. Residues 152–580 (YNDLYYAALA…EMKDFTKDVV (429 aa)) enclose the Topo IA-type catalytic domain. The segment at 186 to 191 (SLGRVQ) is interaction with DNA. The O-(5'-phospho-DNA)-tyrosine intermediate role is filled by Tyr-305. The disordered stretch occupies residues 691–711 (MNKNEGLDNNPFKDALKNLNL).

The protein belongs to the type IA topoisomerase family. The cofactor is Mg(2+).

It catalyses the reaction ATP-independent breakage of single-stranded DNA, followed by passage and rejoining.. Its function is as follows. Releases the supercoiling and torsional tension of DNA, which is introduced during the DNA replication and transcription, by transiently cleaving and rejoining one strand of the DNA duplex. Introduces a single-strand break via transesterification at a target site in duplex DNA. The scissile phosphodiester is attacked by the catalytic tyrosine of the enzyme, resulting in the formation of a DNA-(5'-phosphotyrosyl)-enzyme intermediate and the expulsion of a 3'-OH DNA strand. The free DNA strand then undergoes passage around the unbroken strand, thus removing DNA supercoils. Finally, in the religation step, the DNA 3'-OH attacks the covalent intermediate to expel the active-site tyrosine and restore the DNA phosphodiester backbone. The chain is DNA topoisomerase 3 from Staphylococcus aureus (strain MRSA252).